The following is a 314-amino-acid chain: Short-chain dehydrogenase/reductase sthC (314 aa).

The span at methionine 1–valine 10 shows a compositional bias: polar residues. The disordered stretch occupies residues methionine 1–methionine 27. Residues valine 56, lysine 80, aspartate 105, asparagine 132, and arginine 167 each coordinate NADP(+). The active-site Proton donor is the serine 191. Tyrosine 222 and lysine 226 together coordinate NADP(+). Tyrosine 222 (proton acceptor) is an active-site residue. The active-site Lowers pKa of active site Tyr is the lysine 226.

The protein belongs to the short-chain dehydrogenases/reductases (SDR) family.

It catalyses the reaction dehydroprobetaenone I + AH2 = probetaenone I + A. The catalysed reaction is betaenone C + AH2 = betaenone B + A. Its pathway is mycotoxin biosynthesis. Functionally, short-chain dehydrogenase/reductase; part of the gene cluster that mediates the biosynthesis of the phytotoxin stemphyloxin II. The first step of the pathway is the synthesis of dehydroprobetaenone I by the polyketide synthase sthA and the enoyl reductase sthE via condensation of one acetyl-CoA starter unit with 7 malonyl-CoA units and 5 methylations. The C-terminal reductase (R) domain of sthA catalyzes the reductive release of the polyketide chain. Because sthA lacks a designated enoylreductase (ER) domain, the required activity is provided the enoyl reductase sthE. The short-chain dehydrogenase/reductase sthC then catalyzes reduction of dehydroprobetaenone I to probetaenone I. The cytochrome P450 monooxygenase sthF catalyzes successive epoxidation, oxidation (resulting from epoxide opening) and hydroxylation to install a tertiary alcohol in the decaline ring to yield betaenone C from dehydroprobetaenone I and betaenone B from probetaenone I. The FAD-linked oxidoreductase sthB is responsible for the conversion of betaenone C to betaenone A via an intramolecular aldol reaction between C-1 and C-17 to form the bridged tricyclic system in betaenone A. Finally, the cytochrome P450 monooxygenase sthD catalyzes the hydroxylation of C-15 to afford the final metabolite stemphyloxin II. The chain is Short-chain dehydrogenase/reductase sthC from Phaeosphaeria nodorum (strain SN15 / ATCC MYA-4574 / FGSC 10173) (Glume blotch fungus).